Here is a 372-residue protein sequence, read N- to C-terminus: 2,7-anhydro-N-acetylneuraminate hydratase (372 aa).

NAD(+)-binding residues include Tyr11, Phe12, Asp33, Asn36, Thr68, Asn70, His73, Glu90, Lys91, and Trp160.

This sequence belongs to the Gfo/Idh/MocA family. As to quaternary structure, homodimer. It depends on NAD(+) as a cofactor.

The catalysed reaction is N-acetyl-2,7-anhydro-alpha-neuraminate + H2O = N-acetyl-alpha-neuraminate. The enzyme catalyses 2-deoxy-2,3-dehydro-N-acetylneuraminate + H2O = N-acetyl-alpha-neuraminate. Its activity is regulated as follows. All conversions require NAD(+) as a cofactor, which is regenerated in the reaction. The presence of EGTA and several divalent cations does not affect the activity. Functionally, hydratase involved in the degradation of sialic acids. Catalyzes the reversible conversion of the dehydrated form of N-acetylneuraminate (Neu5Ac), 2,7-anhydro-N-acetylneuraminate (2,7-AN), to Neu5Ac. Also catalyzes the irreversible conversion of 2-deoxy-2,3-didehydro-N-acetylneuraminate (2,3-EN) to Neu5Ac. The reaction mechanism involves keto intermediates and the transient formation of NADH. This Escherichia coli (strain K12) protein is 2,7-anhydro-N-acetylneuraminate hydratase.